A 392-amino-acid polypeptide reads, in one-letter code: Enoyl-[acyl-carrier-protein] reductase [NADH] (392 aa).

NAD(+) contacts are provided by residues 48 to 53 (GCSTGY), 74 to 75 (FE), 111 to 112 (DA), and 139 to 140 (LA). Tyr-225 provides a ligand contact to substrate. The Proton donor role is filled by Tyr-235. Residues Lys-244 and 273–275 (LVT) contribute to the NAD(+) site.

Belongs to the TER reductase family. As to quaternary structure, monomer.

It carries out the reaction a 2,3-saturated acyl-[ACP] + NAD(+) = a (2E)-enoyl-[ACP] + NADH + H(+). It functions in the pathway lipid metabolism; fatty acid biosynthesis. Involved in the final reduction of the elongation cycle of fatty acid synthesis (FAS II). Catalyzes the reduction of a carbon-carbon double bond in an enoyl moiety that is covalently linked to an acyl carrier protein (ACP). The protein is Enoyl-[acyl-carrier-protein] reductase [NADH] of Idiomarina loihiensis (strain ATCC BAA-735 / DSM 15497 / L2-TR).